Here is a 239-residue protein sequence, read N- to C-terminus: Small ribosomal subunit protein eS6A (239 aa).

Phosphoserine occurs at positions 235 and 236.

Belongs to the eukaryotic ribosomal protein eS6 family. As to quaternary structure, component of the small ribosomal subunit (SSU). Mature yeast ribosomes consist of a small (40S) and a large (60S) subunit. The 40S small subunit contains 1 molecule of ribosomal RNA (18S rRNA) and at least 33 different proteins. The large 60S subunit contains 3 rRNA molecules (25S, 5.8S and 5S rRNA) and at least 46 different proteins. Interacts with snoRNA U3. uS11 interacts with MPP10. Component of the ribosomal small subunit (SSU) processome composed of at least 40 protein subunits and snoRNA U3. In terms of processing, phosphorylated.

Its subcellular location is the cytoplasm. In terms of biological role, component of the ribosome, a large ribonucleoprotein complex responsible for the synthesis of proteins in the cell. The small ribosomal subunit (SSU) binds messenger RNAs (mRNAs) and translates the encoded message by selecting cognate aminoacyl-transfer RNA (tRNA) molecules. The large subunit (LSU) contains the ribosomal catalytic site termed the peptidyl transferase center (PTC), which catalyzes the formation of peptide bonds, thereby polymerizing the amino acids delivered by tRNAs into a polypeptide chain. The nascent polypeptides leave the ribosome through a tunnel in the LSU and interact with protein factors that function in enzymatic processing, targeting, and the membrane insertion of nascent chains at the exit of the ribosomal tunnel. eS6 is involved in nucleolar processing of pre-18S ribosomal RNA and ribosome assembly. This is Small ribosomal subunit protein eS6A (rps601) from Schizosaccharomyces pombe (strain 972 / ATCC 24843) (Fission yeast).